The following is a 182-amino-acid chain: DOMON domain-containing protein Y73F4A.1 (182 aa).

The first 18 residues, 1 to 18 (MFVLAIVFAFVFIPSSSS), serve as a signal peptide directing secretion. The region spanning 26–143 (ELVSMNWNVK…CLNWMVVPGG (118 aa)) is the DOMON domain. N-linked (GlcNAc...) asparagine glycosylation is found at Asn-47 and Asn-128.

It is found in the secreted. The chain is DOMON domain-containing protein Y73F4A.1 from Caenorhabditis elegans.